A 512-amino-acid chain; its full sequence is 2-isopropylmalate synthase (512 aa).

One can recognise a Pyruvate carboxyltransferase domain in the interval 4–266 (IQFFDTTLRD…ETNIVLNQFK (263 aa)). Mn(2+) contacts are provided by Asp-13, His-201, His-203, and Asn-237. The interval 390 to 512 (ELKHLQVQYV…SKQADFEEVK (123 aa)) is regulatory domain.

This sequence belongs to the alpha-IPM synthase/homocitrate synthase family. LeuA type 1 subfamily. Homodimer. The cofactor is Mn(2+).

It is found in the cytoplasm. It catalyses the reaction 3-methyl-2-oxobutanoate + acetyl-CoA + H2O = (2S)-2-isopropylmalate + CoA + H(+). The protein operates within amino-acid biosynthesis; L-leucine biosynthesis; L-leucine from 3-methyl-2-oxobutanoate: step 1/4. Functionally, catalyzes the condensation of the acetyl group of acetyl-CoA with 3-methyl-2-oxobutanoate (2-ketoisovalerate) to form 3-carboxy-3-hydroxy-4-methylpentanoate (2-isopropylmalate). This Listeria innocua serovar 6a (strain ATCC BAA-680 / CLIP 11262) protein is 2-isopropylmalate synthase.